The primary structure comprises 97 residues: HssA/B-like protein 47 (97 aa).

The disordered stretch occupies residues 1 to 33 (MTLFSSISSISNPMTSSKSSIASFGSGTSMSSN).

It belongs to the hssA/B family.

This chain is HssA/B-like protein 47 (hssl47), found in Dictyostelium discoideum (Social amoeba).